The following is a 142-amino-acid chain: Putative pre-16S rRNA nuclease (142 aa).

The protein belongs to the YqgF nuclease family.

It localises to the cytoplasm. Functionally, could be a nuclease involved in processing of the 5'-end of pre-16S rRNA. This is Putative pre-16S rRNA nuclease from Chloroflexus aggregans (strain MD-66 / DSM 9485).